We begin with the raw amino-acid sequence, 387 residues long: Zinc homeostasis factor 1 (387 aa).

4 helical membrane passes run isoleucine 10 to alanine 30, leucine 34 to leucine 54, glutamate 77 to methionine 97, and threonine 113 to phenylalanine 133. Over residues serine 195–serine 214 the composition is skewed to polar residues. The segment at serine 195–lysine 221 is disordered. 2 helical membrane-spanning segments follow: residues phenylalanine 234–isoleucine 254 and phenylalanine 263–proline 283.

Belongs to the cation diffusion facilitator (CDF) transporter (TC 2.A.4) family. SLC30A subfamily.

It localises to the endoplasmic reticulum membrane. The protein resides in the nucleus membrane. In terms of biological role, involved in zinc homeostasis, where it plays a role in its accumulation in the endoplasmic reticulum/nucleus. Also has a role in the sequestration of cadmium into the endoplasmic reticulum. This Schizosaccharomyces pombe (strain 972 / ATCC 24843) (Fission yeast) protein is Zinc homeostasis factor 1 (zhf1).